A 549-amino-acid chain; its full sequence is Polynucleotide 5'-hydroxyl-kinase nol-9 (549 aa).

190 to 197 (GHKGAGKS) is a binding site for ATP.

Belongs to the Clp1 family. NOL9/GRC3 subfamily.

It is found in the nucleus. It localises to the nucleolus. Polynucleotide 5'-kinase involved in rRNA processing. This is Polynucleotide 5'-hydroxyl-kinase nol-9 (nol-9) from Caenorhabditis elegans.